Here is a 536-residue protein sequence, read N- to C-terminus: Glucose-6-phosphate isomerase (536 aa).

Glu-345 acts as the Proton donor in catalysis. Catalysis depends on residues His-376 and Lys-505.

Belongs to the GPI family.

It localises to the cytoplasm. It carries out the reaction alpha-D-glucose 6-phosphate = beta-D-fructose 6-phosphate. It participates in carbohydrate biosynthesis; gluconeogenesis. Its pathway is carbohydrate degradation; glycolysis; D-glyceraldehyde 3-phosphate and glycerone phosphate from D-glucose: step 2/4. Its function is as follows. Catalyzes the reversible isomerization of glucose-6-phosphate to fructose-6-phosphate. The protein is Glucose-6-phosphate isomerase of Ruegeria sp. (strain TM1040) (Silicibacter sp.).